The following is a 1003-amino-acid chain: Calcium-transporting ATPase sarcoplasmic/endoplasmic reticulum type (1003 aa).

Over 1–59 (MEDAHAKKWEEVVDYFGVDPERGLALEQVKKNQEKYGPNELPAEEGKSLLTLILEQFDD) the chain is Cytoplasmic. Residues 60 to 78 (LLVKILLLAAIISLVLALF) traverse the membrane as a helical segment. The Extracellular segment spans residues 79–89 (EEHDDEAEQLT). A helical membrane pass occupies residues 90 to 110 (AYVEPFVILLILIANAVVGVW). Over 111-262 (QEKNAESAIE…QQKLDEFGEQ (152 aa)) the chain is Cytoplasmic. Residues 263-282 (LSKVISVICVAVWAINIGHF) form a helical membrane-spanning segment. Residues 283–300 (NDPAHGGSWIKGAIYYFK) lie on the Extracellular side of the membrane. A helical membrane pass occupies residues 301–318 (IAVALAVAAIPEGLPAVI). The Cytoplasmic portion of the chain corresponds to 319–775 (TTCLALGTRR…RYLISSNIGE (457 aa)). Asp-354 functions as the 4-aspartylphosphate intermediate in the catalytic mechanism. Lys-519 provides a ligand contact to ATP. The chain crosses the membrane as a helical span at residues 776–799 (VVSIFLTAALGLPEALIPVQLLWV). The Extracellular segment spans residues 800–840 (NLVTDGLPATALGFNPPDLDIMNKPPRRADEGLITGWLFFR). The chain crosses the membrane as a helical span at residues 841-863 (YMAIGTYVGAATVGAAAHWFMMS). At 864–898 (PTGPGLNFYQLSHHLQCTPENEYFEGIDCEIFSDP) the chain is on the cytoplasmic side. Residues 899 to 917 (HPMTMALSVLVTIEMLNAI) traverse the membrane as a helical segment. Residues 918–934 (NSLSENQSLLVMPPWSN) lie on the Extracellular side of the membrane. The chain crosses the membrane as a helical span at residues 935–954 (IWLISAICLSMTLHFVILYV). Residues 955–1003 (EILSTVFQICPLTLTEWIVVLKISFPVLLLDEVLKFVARKYTDEFSFIK) lie on the Cytoplasmic side of the membrane.

It belongs to the cation transport ATPase (P-type) (TC 3.A.3) family.

The protein resides in the sarcoplasmic reticulum membrane. The enzyme catalyses Ca(2+)(in) + ATP + H2O = Ca(2+)(out) + ADP + phosphate + H(+). This magnesium-dependent enzyme catalyzes the hydrolysis of ATP coupled with the transport of the calcium. The sequence is that of Calcium-transporting ATPase sarcoplasmic/endoplasmic reticulum type from Artemia franciscana (Brine shrimp).